The sequence spans 1482 residues: Cystic fibrosis transmembrane conductance regulator (1482 aa).

At 1–77 the chain is on the cytoplasmic side; the sequence is MQRSPLEKAS…KLINALRRCF (77 aa). Residues 78 to 98 traverse the membrane as a helical segment; the sequence is FWRFMFYGILLYLGEVTKAVQ. One can recognise an ABC transmembrane type-1 1 domain in the interval 81 to 365; it reads FMFYGILLYL…WAVQTWYDSL (285 aa). Residues 99–122 are Extracellular-facing; it reads PLLLGRIIASYDPDNKVERSIAIY. Residues 123–146 traverse the membrane as a helical segment; that stretch reads LGIGLCLLFIVRTLLLHPAIFGLH. The Cytoplasmic portion of the chain corresponds to 147-195; sequence HIGMQMRIAMFSLIYKKILKLSSRVLDKISIGQLVSLLSNNLNKFDEGL. The helical transmembrane segment at 196-216 threads the bilayer; that stretch reads ALAHFVWIAPLQVTLLMGLLW. The Extracellular portion of the chain corresponds to 217–222; the sequence is ELLQAS. Residues 223 to 243 form a helical membrane-spanning segment; sequence AFCGLGFLIVLALVQAGLGRM. Residues 244–298 are Cytoplasmic-facing; the sequence is MMKYRDQRAGKINERLVITSEMIENIQSVKAYCWEEAMEKMIENLRQTELKLTRK. The helical transmembrane segment at 299 to 319 threads the bilayer; sequence AAYVRYFNSSAFFFSGFFVVF. Over 320-339 the chain is Extracellular; that stretch reads LSVLPYALIKGIILRKIFTT. Residues 340–358 form a helical membrane-spanning segment; the sequence is ISFCIVLRMAVTRQFPWAV. The Cytoplasmic portion of the chain corresponds to 359 to 859; the sequence is QTWYDSLGAI…YLRYLAVNKS (501 aa). Residues Trp401, 458–465, and Gln493 each bind ATP; that span reads GSTGAGKT. The ABC transporter 1 domain maps to 423–646; the sequence is NGDNSLFFSN…RPDFSSKLMG (224 aa). Cys524 carries S-palmitoyl cysteine lipidation. 2 positions are modified to phosphoserine: Ser549 and Ser660. Residues 654–832 are disordered R region; it reads SAERRNSILT…EEINEEYLKE (179 aa). Phosphoserine; by PKA is present on Ser670. Ser686 carries the phosphoserine modification. Lys688 is covalently cross-linked (Glycyl lysine isopeptide (Lys-Gly) (interchain with G-Cter in ubiquitin)). Phosphoserine is present on residues Ser700 and Ser712. Thr717 is modified (phosphothreonine). A phosphoserine mark is found at Ser738, Ser769, Ser791, Ser796, and Ser814. Residues 860–880 traverse the membrane as a helical segment; that stretch reads LSLVLIWCLVIFLAEVAISLA. The region spanning 860–1156 is the ABC transmembrane type-1 2 domain; that stretch reads LSLVLIWCLV…AVNSSIDVDS (297 aa). The Extracellular portion of the chain corresponds to 881–919; that stretch reads VLLLLDKSPRYSKGNGTASGNGSSAVIITSTSSYYLFYI. Residues Asn895 and Asn901 are each glycosylated (N-linked (GlcNAc...) asparagine). The discontinuously helical transmembrane segment at 920-940 threads the bilayer; the sequence is YVGVADTLLALGFFRGLPLVH. Residues 941-991 lie on the Cytoplasmic side of the membrane; that stretch reads TLITVSKILHHRMLHSVLRAPMSTLNMLKAGGILNRFSKDIAILDDLLPLT. Residues 992-1012 form a helical membrane-spanning segment; that stretch reads IFDFVQLLLIVIGAVAVVSVL. Residues 1013–1014 are Extracellular-facing; it reads QP. Residues 1015 to 1035 traverse the membrane as a helical segment; the sequence is YIFLATVPVIAAFVILRGYFL. At 1036–1096 the chain is on the cytoplasmic side; the sequence is HTSQQLKQLE…TANWFLYLST (61 aa). The helical transmembrane segment at 1097–1117 threads the bilayer; the sequence is LRWFQMRIEMIFVVFFIAVTF. Residues 1118–1131 lie on the Extracellular side of the membrane; sequence ISILTTGEGEGTVG. A helical transmembrane segment spans residues 1132-1152; it reads IILTLAMNIMGTLQWAVNSSI. Residues 1153 to 1482 are Cytoplasmic-facing; that stretch reads DVDSLMRSVS…TEEEVQETRL (330 aa). One can recognise an ABC transporter 2 domain in the interval 1212 to 1445; that stretch reads MTVKDLTARY…KSLFRQAISP (234 aa). Residues Tyr1221 and 1246-1253 contribute to the ATP site; that span reads GRTGAGKS. Positions 1388–1482 are interaction with GORASP2; that stretch reads RTLKQAFADC…TEEEVQETRL (95 aa). Cys1397 carries the S-palmitoyl cysteine lipid modification. Phosphoserine is present on residues Ser1446 and Ser1458. Positions 1450–1482 are disordered; that stretch reads KLFPRRNSSKHKSRSPITALKEETEEEVQETRL. The segment covering 1451–1463 has biased composition (basic residues); it reads LFPRRNSSKHKSR. Over residues 1472 to 1482 the composition is skewed to acidic residues; sequence ETEEEVQETRL. Residues 1480-1482 carry the PDZ-binding motif; it reads TRL.

Belongs to the ABC transporter superfamily. ABCC family. CFTR transporter (TC 3.A.1.202) subfamily. In terms of assembly, monomer; does not require oligomerization for channel activity. May form oligomers in the membrane. Interacts with SLC26A3, SLC26A6 and NHERF1. Interacts with SHANK2. Interacts with MYO6. Interacts (via C-terminus) with GOPC (via PDZ domain); this promotes CFTR internalization and thereby decreases channel activity. Interacts with SLC4A7 through NHERF1. Found in a complex with MYO5B and RAB11A. Interacts with ANO1. Interacts with SLC26A8. Interacts with AHCYL1; the interaction increases CFTR activity. Interacts with CSE1L. The core-glycosylated form interacts with GORASP2 (via PDZ GRASP-type 1 domain) in respone to ER stress. Interacts with MARCHF2; the interaction leads to CFTR ubiqtuitination and degradation. Interacts with ADGRG2. In terms of processing, N-glycosylated. Post-translationally, phosphorylated; cAMP treatment promotes phosphorylation and activates the channel. Dephosphorylation decreases the ATPase activity (in vitro). Phosphorylation at PKA sites activates the channel. Phosphorylation at PKC sites enhances the response to phosphorylation by PKA. Phosphorylated by AMPK; this inhibits channel activity. Ubiquitinated, leading to its degradation in the lysosome. Deubiquitination by USP10 in early endosomes enhances its endocytic recycling to the cell membrane. Ubiquitinated by RNF185 during ER stress. Ubiquitinated by MARCHF2.

Its subcellular location is the apical cell membrane. It localises to the early endosome membrane. The protein localises to the cell membrane. It is found in the recycling endosome membrane. The protein resides in the endoplasmic reticulum membrane. Its subcellular location is the nucleus. The enzyme catalyses ATP + H2O + closed Cl(-) channel = ADP + phosphate + open Cl(-) channel.. The catalysed reaction is chloride(in) = chloride(out). It catalyses the reaction hydrogencarbonate(in) = hydrogencarbonate(out). It carries out the reaction ATP + H2O = ADP + phosphate + H(+). Its function is as follows. Epithelial ion channel that plays an important role in the regulation of epithelial ion and water transport and fluid homeostasis. Mediates the transport of chloride ions across the cell membrane. Possesses an intrinsic ATPase activity and utilizes ATP to gate its channel; the passive flow of anions through the channel is gated by cycles of ATP binding and hydrolysis by the ATP-binding domains. The ion channel is also permeable to HCO(3)(-); selectivity depends on the extracellular chloride concentration. Exerts its function also by modulating the activity of other ion channels and transporters. Contributes to the regulation of the pH and the ion content of the epithelial fluid layer. Modulates the activity of the epithelial sodium channel (ENaC) complex, in part by regulating the cell surface expression of the ENaC complex. May regulate bicarbonate secretion and salvage in epithelial cells by regulating the transporter SLC4A7. Can inhibit the chloride channel activity of ANO1. Plays a role in the chloride and bicarbonate homeostasis during sperm epididymal maturation and capacitation. This Otolemur garnettii (Small-eared galago) protein is Cystic fibrosis transmembrane conductance regulator.